The following is a 527-amino-acid chain: Glutamyl-tRNA reductase 1, chloroplastic (527 aa).

A chloroplast-targeting transit peptide spans 1–43 (MAGATSATAAAGAFAAAKARGPAAACPWLVAAGGRRRSGVVRC). Substrate is bound by residues 124-127 (TCNR), serine 184, 189-191 (EGQ), and glutamine 195. The Nucleophile role is filled by cysteine 125. 266-271 (GAGKMG) lines the NADP(+) pocket.

It belongs to the glutamyl-tRNA reductase family. In terms of assembly, homodimer.

The protein localises to the plastid. The protein resides in the chloroplast. The enzyme catalyses (S)-4-amino-5-oxopentanoate + tRNA(Glu) + NADP(+) = L-glutamyl-tRNA(Glu) + NADPH + H(+). It functions in the pathway porphyrin-containing compound metabolism; protoporphyrin-IX biosynthesis; 5-aminolevulinate from L-glutamyl-tRNA(Glu): step 1/2. Functionally, catalyzes the NADPH-dependent reduction of glutamyl-tRNA(Glu) to glutamate 1-semialdehyde (GSA). The polypeptide is Glutamyl-tRNA reductase 1, chloroplastic (HEMA1) (Hordeum vulgare (Barley)).